Consider the following 218-residue polypeptide: Replication protein RepB (218 aa).

The interval 1–26 is disordered; that stretch reads MKSESKIDWTVPRPNKNPKTKQPYKR. Residues 16–26 are compositionally biased toward basic residues; the sequence is KNPKTKQPYKR.

The protein belongs to the Gram-positive plasmids replication protein type 2 family.

In terms of biological role, is essential for plasmid replication. Nicks the positive strand at the plus origin of replication. The polypeptide is Replication protein RepB (repB) (Lactiplantibacillus plantarum (Lactobacillus plantarum)).